Consider the following 161-residue polypeptide: Phosphopantetheine adenylyltransferase (161 aa).

Thr9 contacts substrate. Residues 9–10 (TF) and His17 contribute to the ATP site. Residues Lys41, Leu73, and Arg87 each coordinate substrate. ATP contacts are provided by residues 88–90 (GLR), Glu98, and 123–129 (YQFISGT).

This sequence belongs to the bacterial CoaD family. In terms of assembly, homohexamer. It depends on Mg(2+) as a cofactor.

It localises to the cytoplasm. It catalyses the reaction (R)-4'-phosphopantetheine + ATP + H(+) = 3'-dephospho-CoA + diphosphate. It participates in cofactor biosynthesis; coenzyme A biosynthesis; CoA from (R)-pantothenate: step 4/5. Its function is as follows. Reversibly transfers an adenylyl group from ATP to 4'-phosphopantetheine, yielding dephospho-CoA (dPCoA) and pyrophosphate. In Cupriavidus necator (strain ATCC 17699 / DSM 428 / KCTC 22496 / NCIMB 10442 / H16 / Stanier 337) (Ralstonia eutropha), this protein is Phosphopantetheine adenylyltransferase.